A 210-amino-acid polypeptide reads, in one-letter code: 2,3-bisphosphoglycerate-dependent phosphoglycerate mutase (210 aa).

Substrate is bound by residues 9 to 16 (RHGQSEWN), 22 to 23 (TG), arginine 61, 88 to 91 (ERDY), lysine 99, 115 to 116 (RR), and 159 to 160 (GN). Histidine 10 (tele-phosphohistidine intermediate) is an active-site residue. Glutamate 88 acts as the Proton donor/acceptor in catalysis.

It belongs to the phosphoglycerate mutase family. BPG-dependent PGAM subfamily. In terms of assembly, homodimer.

The enzyme catalyses (2R)-2-phosphoglycerate = (2R)-3-phosphoglycerate. It participates in carbohydrate degradation; glycolysis; pyruvate from D-glyceraldehyde 3-phosphate: step 3/5. Functionally, catalyzes the interconversion of 2-phosphoglycerate and 3-phosphoglycerate. The polypeptide is 2,3-bisphosphoglycerate-dependent phosphoglycerate mutase (Parvibaculum lavamentivorans (strain DS-1 / DSM 13023 / NCIMB 13966)).